The following is a 273-amino-acid chain: Serine acetyltransferase (273 aa).

The protein belongs to the transferase hexapeptide repeat family. Part of the cysteine synthase complex formed at a ratio of 1 copy of this protein and 2 copies of O-acetylserine sulfhydrylase (cysK). The complex reversibly dissociates in the presence of O-acetyl-L-serine in the absence of hydrogen sulfide.

It localises to the cytoplasm. The enzyme catalyses L-serine + acetyl-CoA = O-acetyl-L-serine + CoA. It functions in the pathway amino-acid biosynthesis; L-cysteine biosynthesis; L-cysteine from L-serine: step 1/2. With respect to regulation, sensitive to feedback inhibition by L-cysteine. The sequence is that of Serine acetyltransferase (cysE) from Salmonella typhimurium (strain LT2 / SGSC1412 / ATCC 700720).